The chain runs to 206 residues: Small ribosomal subunit protein uS4A (206 aa).

Residues 98–163 (MRLDNVVYRL…SERFKMFAEN (66 aa)) form the S4 RNA-binding domain.

This sequence belongs to the universal ribosomal protein uS4 family. As to quaternary structure, part of the 30S ribosomal subunit. Contacts protein S5. The interaction surface between S4 and S5 is involved in control of translational fidelity.

In terms of biological role, one of the primary rRNA binding proteins, it binds directly to 16S rRNA where it nucleates assembly of the body of the 30S subunit. Functionally, with S5 and S12 plays an important role in translational accuracy. The chain is Small ribosomal subunit protein uS4A from Clostridium perfringens (strain ATCC 13124 / DSM 756 / JCM 1290 / NCIMB 6125 / NCTC 8237 / Type A).